Reading from the N-terminus, the 428-residue chain is Light-independent protochlorophyllide reductase subunit N (428 aa).

C29, C54, and C115 together coordinate [4Fe-4S] cluster.

This sequence belongs to the BchN/ChlN family. In terms of assembly, protochlorophyllide reductase is composed of three subunits; BchL, BchN and BchB. Forms a heterotetramer of two BchB and two BchN subunits. [4Fe-4S] cluster serves as cofactor.

It catalyses the reaction chlorophyllide a + oxidized 2[4Fe-4S]-[ferredoxin] + 2 ADP + 2 phosphate = protochlorophyllide a + reduced 2[4Fe-4S]-[ferredoxin] + 2 ATP + 2 H2O. It functions in the pathway porphyrin-containing compound metabolism; bacteriochlorophyll biosynthesis (light-independent). Functionally, component of the dark-operative protochlorophyllide reductase (DPOR) that uses Mg-ATP and reduced ferredoxin to reduce ring D of protochlorophyllide (Pchlide) to form chlorophyllide a (Chlide). This reaction is light-independent. The NB-protein (BchN-BchB) is the catalytic component of the complex. This Cereibacter sphaeroides (strain ATCC 17029 / ATH 2.4.9) (Rhodobacter sphaeroides) protein is Light-independent protochlorophyllide reductase subunit N.